The primary structure comprises 639 residues: MSIKLEDLHSFNEAVLFKGEEDEAPAPVLLLDKYRVRLVPITELPLVSNYSNTSQLGLNSEEVLVIDSPIESAEKQKTSSLLNRRENKKTIKSEKEDESMDMETAEGDKENTVSETGGGPLVTSFLTLDKLEKDGVNDVEIVGLDCEIQFFDANPIPFEDGISLQRFLRLESSKNFSAAVDKLPIWISTIGHHFPSVCWLAAGRTNKNVQVSGATRILGYFNENSQKLVKQLNEACGAAQVNRYRAVYDVIRKIATPTREAPGEVIIDMRWNTKSSLVLLEQPDNAADCTIKIDLGWGDNRFFIDETIFEQLFFVLNLADVLANPEKEVVFRSESDKFDDLVQEMKQLVEACSHEDNVFASNEKSEQVTDKVWNIVRKCSDVKQATMLFKNFLQALTYGKIKSHVQEGNKSHLASLIRASKTCDFRMPILERLSTIEMMMEIGVESLRGRIINKFSDTLQFPSDELTFILKTCENDLSTLEGTLHSSVVSLLPITMAMATIHQIFGFLNVKDLVVLPDLARRVLTKYTTGMVEKAKRGETETDYVFETTLPLLRMNKEAFMHKRPRIWTCENTNTVGANVQTRAMTTLELEPSLEHVCRLVNASRPVRPIDEDNRKPTEEERNADYTVSHTIFSYLPKL.

The segment covering 76–95 has biased composition (basic and acidic residues); that stretch reads QKTSSLLNRRENKKTIKSEK. The segment at 76–116 is disordered; the sequence is QKTSSLLNRRENKKTIKSEKEDESMDMETAEGDKENTVSET. Acidic residues predominate over residues 96–105; that stretch reads EDESMDMETA.

This sequence belongs to the ZWILCH family. As to quaternary structure, component of the RZZ complex composed of rod-1, czw-1 and zwl-1. Interacts with the spindly-like protein spdl-1. Interacts with NDC80 complex component ndc-80.

It is found in the cytoplasm. The protein resides in the cell cortex. The protein localises to the chromosome. Its subcellular location is the centromere. It localises to the kinetochore. It is found in the cytoskeleton. The protein resides in the spindle. Essential component of the mitotic checkpoint, which prevents cells from prematurely exiting mitosis. Required for chromosome segregation, the assembly of the dynein-dynactin and mdf-1-mdf-2 complexes onto kinetochores and spindle pole separation. Its function related to the spindle assembly machinery and kinetochore-microtubule attachments likely depends on its association in the mitotic RZZ complex. The RZZ complex recruits the spindly-like protein spdl-1 to kinetochores. To prevent irregular chromosome segregation, the complex also inhibits the attachment of the kinetochore-associated NDC80 complex to microtubules. The recruitment of spdl-1 to kinetochores relieves this inhibition. Required for embryonic development. In Caenorhabditis briggsae, this protein is Protein zwilch homolog (zwl-1).